The primary structure comprises 59 residues: Large ribosomal subunit protein bL33 (59 aa).

Belongs to the bacterial ribosomal protein bL33 family.

The protein is Large ribosomal subunit protein bL33 of Borrelia turicatae (strain 91E135).